The chain runs to 472 residues: Transmembrane protein 8B (472 aa).

The disordered stretch occupies residues 1–36 (MNMPQSLGNQPLPPEPPSLGTPAEGPGTTSPPEHCW). Residues 1–233 (MNMPQSLGNQ…ADALTYGFQL (233 aa)) lie on the Extracellular side of the membrane. Asn92 and Asn100 each carry an N-linked (GlcNAc...) asparagine glycan. Positions 182–221 (FLSPCVDDCGPYGQCKLLRTHNYLYAACECKAGWRGWGCT) constitute an EGF-like domain. 3 disulfide bridges follow: Cys186–Cys196, Cys190–Cys209, and Cys211–Cys220. The helical transmembrane segment at 234-254 (LSTLLLCLSNLMFLPPVVLAI) threads the bilayer. The Cytoplasmic portion of the chain corresponds to 255 to 257 (RSR). The chain crosses the membrane as a helical span at residues 258-277 (YVLEAAVYTFTMFFSTFYHA). The Extracellular segment spans residues 278–292 (CDQPGIVVFCIMDYD). The chain crosses the membrane as a helical span at residues 293 to 313 (VLQFCDFLGSLMSVWVTVIAM). Over 314–315 (AR) the chain is Cytoplasmic. Residues 316–336 (LQPVVKQVLYLLGAMLLSMAL) traverse the membrane as a helical segment. The Extracellular portion of the chain corresponds to 337–342 (QLDRHG). Residues 343–363 (LWNLLGPSLFALGILATAWTV) form a helical membrane-spanning segment. At 364 to 379 (RSVRRRHCYPPTWRRW) the chain is on the cytoplasmic side. A helical transmembrane segment spans residues 380–400 (LFYLCPGSLIAGSAVLLYAFV). Residues 401–405 (ETRDN) are Extracellular-facing. The helical transmembrane segment at 406 to 426 (YFYIHSIWHMLIAGSVGFLLP) threads the bilayer. The Cytoplasmic segment spans residues 427-472 (PRAKTDHGVPSGARARGCGYQLCINEQEELGLVGPGGATVSSICAS).

This sequence belongs to the TMEM8 family. Isoform 2 (via its cytoplasmic part) interacts with EZR. In terms of processing, isoform 2 is N-glycosylated.

It localises to the cell membrane. The protein localises to the cytoplasm. It is found in the nucleus. Its subcellular location is the mitochondrion. The protein resides in the endoplasmic reticulum. In terms of biological role, may function as a regulator of the EGFR pathway. Probable tumor suppressor which may function in cell growth, proliferation and adhesion. The polypeptide is Transmembrane protein 8B (TMEM8B) (Homo sapiens (Human)).